The primary structure comprises 5538 residues: Leashin (5538 aa).

Residues 1–10 are compositionally biased toward gly residues; it reads MFRALMGGGR. 22 disordered regions span residues 1–270, 286–315, 331–365, 510–555, 596–712, 800–901, 913–944, 1027–1145, 1164–1297, 1310–1398, 1432–1993, 2067–2146, 2165–2207, 2233–3065, 3077–3894, 3910–4034, 4072–4128, 4238–4421, 4442–4463, 4509–4698, 4733–4850, and 4910–5052; these read MFRA…SSMG, EVDP…TFGI, LPLP…PHTH, SRDA…KKSS, TESV…DISQ, AATS…FPTG, ALAS…PVPT, NRPH…KDSF, VLSG…GYRD, PTPP…RYVS, EDPT…TSVE, SELL…VNAF, NRLS…SPPA, PEAA…SQPI, MAEE…EIVS, EEKA…DTGL, KFKQ…EEPL, EAAL…SNQA, PRPL…DEND, LRRQ…TSNT, KTDG…VEQA, and ALTV…RHRR. A woronin bodies-binding region region spans residues 1–1100; it reads MFRALMGGGR…RASGVQLIDR (1100 aa). Over residues 14-23 the composition is skewed to low complexity; that stretch reads SRSTTSSSKS. Composition is skewed to basic and acidic residues over residues 42–51 and 89–167; these read SRGDDRDRGL and VEHD…ERSR. Residues 299–313 are compositionally biased toward polar residues; that stretch reads AGTTSEPPKPSNTTF. The segment covering 334 to 352 has biased composition (pro residues); the sequence is PASPTSPPEPVPTTAPYAP. The segment covering 514–523 has biased composition (basic residues); that stretch reads PRKHHYRQRR. Polar residues predominate over residues 598–607; sequence SVSTARRSQT. Residues 639-655 are compositionally biased toward basic residues; it reads HRSRSRSHSSSRNRRHS. A compositionally biased stretch (low complexity) spans 660 to 674; the sequence is AAVGAAVGSGAIALA. A compositionally biased stretch (basic residues) spans 682 to 698; sequence SRSRSRSRFPRKSKGRK. The segment covering 809 to 825 has biased composition (basic and acidic residues); that stretch reads RAGEILVAKETRSRHSD. Low complexity-rich tracts occupy residues 842–851 and 862–880; these read GDQSSSSVSS and GSDE…GWRW. The segment covering 881-891 has biased composition (basic residues); the sequence is GSKKNKKKKRA. 8 stretches are compositionally biased toward basic and acidic residues: residues 1068–1091, 1098–1145, 1178–1198, 1207–1226, 1356–1365, 1375–1387, 1447–1462, and 1478–1488; these read LTKE…DAER, IDRD…KDSF, SQRR…RGSE, SKSE…RQPE, WGEHKTHEYE, SVDH…REQP, GRVE…ESKS, and EEKAPSSRVIE. Over residues 1506–1516 the composition is skewed to low complexity; it reads QESSEPQTRTS. Composition is skewed to basic and acidic residues over residues 1521–1536, 1549–1559, and 1572–1594; these read VIDR…DGSR, GKERDESELRA, and EELR…DRRS. Residues 1639-1648 show a composition bias toward basic residues; the sequence is KKKRRKRRSK. Basic and acidic residues-rich tracts occupy residues 1672–1686, 1700–1773, and 1788–1800; these read EKLK…EKKA, EPVD…QRRE, and KSGE…KLSE. 2 stretches are compositionally biased toward low complexity: residues 1867–1876 and 1889–1898; these read PAPRSRSRPA and SQSSRRSSIL. The span at 1950-1975 shows a compositional bias: basic and acidic residues; it reads KNSREMRPLWLVERHGPGHGEHKLEE. Polar residues-rich tracts occupy residues 1984 to 1993 and 2121 to 2130; these read KTSSANTSVE and TPQNNVTAAS. Basic and acidic residues-rich tracts occupy residues 2187 to 2196, 2269 to 2279, and 2307 to 2320; these read DADRTHKPIA, VPRDDKRRDSV, and GENK…KNEN. Positions 2321-2331 are enriched in polar residues; the sequence is ANDNSQAQTEQ. The span at 2344 to 2355 shows a compositional bias: basic residues; the sequence is AKKKKKKNKKKR. Positions 2358–2370 are enriched in polar residues; that stretch reads MDSNTQEPTTPVD. Positions 2427-2441 are enriched in basic and acidic residues; the sequence is DVEKAIEAPDVRKEL. Residues 2449 to 2461 are compositionally biased toward low complexity; that stretch reads APEDTPAEPTAET. Basic residues predominate over residues 2473–2484; sequence KKSKKKKKKKNK. Over residues 2494 to 2525 the composition is skewed to polar residues; that stretch reads DPASTETPEASAANSQVVAAEQVESTLETTQP. Basic and acidic residues-rich tracts occupy residues 2580–2590, 2647–2661, and 2677–2691; these read NQAKELPHPEE, PEDK…DLKS, and ALDK…RPAE. Low complexity predominate over residues 2719–2734; that stretch reads EEPTPTAAELETPLSR. The segment covering 2735 to 2747 has biased composition (basic residues); sequence KNSKKNKKKNKRK. Residues 2796–2812 are compositionally biased toward basic and acidic residues; that stretch reads DENKGESRDVQAVKEET. Basic residues predominate over residues 2874–2884; it reads KKKAKKKKNRK. The span at 2885-2894 shows a compositional bias: polar residues; sequence TANVSESQPE. Composition is skewed to basic residues over residues 3003-3013 and 3089-3100; these read KKSKKNKKKKQ and KKTKKEKKKKRQ. Residues 3145–3172 show a composition bias toward basic and acidic residues; it reads AIEHAEAAAEHSQEQPNKDVTLHADHSP. Low complexity predominate over residues 3248-3268; it reads PAMEGGAAAEELVAVEPDVLE. Positions 3293-3303 are enriched in polar residues; it reads ELVNAETTQKT. A compositionally biased stretch (basic residues) spans 3329 to 3341; it reads SKKKDKKKKKKRQ. Residues 3347-3367 are compositionally biased toward basic and acidic residues; sequence DEQRSSTKEEPTAEFSSDHVP. Composition is skewed to low complexity over residues 3397 to 3409 and 3422 to 3435; these read TQTA…SSAS and ESTQ…AQTA. The segment covering 3436-3450 has biased composition (basic residues); that stretch reads KSKKKAKKDKKKRKS. Residues 3480 to 3495 show a composition bias toward basic and acidic residues; the sequence is EGPKPGDKPTSPKDSS. Residues 3547 to 3564 show a composition bias toward low complexity; the sequence is EEQAVVEETVAPPVVDEA. Polar residues-rich tracts occupy residues 3565–3580 and 3604–3613; these read SQLQ…LWSE and VSPSLENNEG. Composition is skewed to basic residues over residues 3642-3652 and 3716-3730; these read KSKKNKKKKKR and KAKK…KRQS. The segment covering 3768–3787 has biased composition (polar residues); that stretch reads TFSQETSETISTEAKSSEPS. Basic and acidic residues predominate over residues 3800 to 3819; the sequence is KENQSHDTEPHGGNDKDLTW. The span at 3823-3837 shows a compositional bias: polar residues; it reads MVSSQVEQQQGTPSD. Basic and acidic residues predominate over residues 3876–3893; it reads DRLERSGEEGTRVKKEIV. Composition is skewed to polar residues over residues 3915-3925 and 3965-3980; these read ISSQGEDTIQV and KDQF…SQSK. The span at 4010-4020 shows a compositional bias: acidic residues; it reads TSQDDSVDAVQ. A compositionally biased stretch (basic and acidic residues) spans 4111-4123; the sequence is ESRENKFKEKQLA. Positions 4244-4255 are enriched in basic residues; sequence KNSKKKSKKAKK. Positions 4328-4345 are enriched in polar residues; that stretch reads LGQTPNMDNQTDDVQSTE. Residues 4378 to 4391 are compositionally biased toward basic residues; it reads KLSKKDRRKAKKKS. A compositionally biased stretch (basic and acidic residues) spans 4392–4406; the sequence is AKDAIEPSDEPELRN. A septal pore-binding region region spans residues 4495 to 5538; the sequence is AIAEFDETAI…SSTMDISNVI (1044 aa). Polar residues predominate over residues 4554–4570; the sequence is TEQSAGLQAKSVSSQGA. Composition is skewed to basic and acidic residues over residues 4574–4591 and 4660–4673; these read IQDD…DQTK and EESH…EKGP. Positions 4940 to 4954 are enriched in low complexity; that stretch reads SSVSSVKSVQSTHSV. Polar residues predominate over residues 4966–4988; sequence RNTSGDLRAASQAQESHGTQPHA. Residues 4989-4998 are compositionally biased toward pro residues; that stretch reads TPQPPQPPPS. A coiled-coil region spans residues 5050-5223; that stretch reads HRRSMQHLQE…QQQIAASLHD (174 aa).

As to quaternary structure, binds directly or indirectly to the Woronin body major protein hexA.

The protein resides in the cell septum. Its function is as follows. Acts as the tether and is essential for anchoring of Woronin bodies at the septal pore. In damaged hyphae, Woronin bodies occlude septal pores in order to separate intact from damaged compartments. The chain is Leashin from Aspergillus fumigatus (strain ATCC MYA-4609 / CBS 101355 / FGSC A1100 / Af293) (Neosartorya fumigata).